We begin with the raw amino-acid sequence, 379 residues long: 1-deoxy-D-xylulose 5-phosphate reductoisomerase (379 aa).

NADPH-binding residues include T10, G11, S12, I13, N39, and N121. 1-deoxy-D-xylulose 5-phosphate is bound at residue K122. E123 serves as a coordination point for NADPH. D147 is a Mn(2+) binding site. Positions 148, 149, 173, and 196 each coordinate 1-deoxy-D-xylulose 5-phosphate. Position 149 (E149) interacts with Mn(2+). An NADPH-binding site is contributed by G202. Residues S209, N214, K215, and E218 each contribute to the 1-deoxy-D-xylulose 5-phosphate site. Residue E218 participates in Mn(2+) binding.

It belongs to the DXR family. Mg(2+) is required as a cofactor. It depends on Mn(2+) as a cofactor.

The catalysed reaction is 2-C-methyl-D-erythritol 4-phosphate + NADP(+) = 1-deoxy-D-xylulose 5-phosphate + NADPH + H(+). Its pathway is isoprenoid biosynthesis; isopentenyl diphosphate biosynthesis via DXP pathway; isopentenyl diphosphate from 1-deoxy-D-xylulose 5-phosphate: step 1/6. Catalyzes the NADPH-dependent rearrangement and reduction of 1-deoxy-D-xylulose-5-phosphate (DXP) to 2-C-methyl-D-erythritol 4-phosphate (MEP). The protein is 1-deoxy-D-xylulose 5-phosphate reductoisomerase of Chlamydia felis (strain Fe/C-56) (Chlamydophila felis).